Consider the following 383-residue polypeptide: Serpin B5 (383 aa).

Asn-106, Asn-133, Asn-176, and Asn-361 each carry an N-linked (GlcNAc...) asparagine glycan.

It belongs to the serpin family. Ov-serpin subfamily.

The protein resides in the secreted. It localises to the extracellular space. In terms of biological role, may not exhibit serine protease inhibitory activity. The sequence is that of Serpin B5 (serpinb5) from Xenopus laevis (African clawed frog).